The following is a 637-amino-acid chain: tRNA uridine 5-carboxymethylaminomethyl modification enzyme MnmG (637 aa).

FAD contacts are provided by residues 15–20 (GAGHAG), valine 127, and serine 182. 274-288 (GPRYCPSIEDKVVRF) is an NAD(+) binding site. Glutamine 371 is an FAD binding site.

It belongs to the MnmG family. As to quaternary structure, homodimer. Heterotetramer of two MnmE and two MnmG subunits. FAD serves as cofactor.

It is found in the cytoplasm. NAD-binding protein involved in the addition of a carboxymethylaminomethyl (cmnm) group at the wobble position (U34) of certain tRNAs, forming tRNA-cmnm(5)s(2)U34. The sequence is that of tRNA uridine 5-carboxymethylaminomethyl modification enzyme MnmG from Heliobacterium modesticaldum (strain ATCC 51547 / Ice1).